A 205-amino-acid chain; its full sequence is Endoribonuclease YbeY (205 aa).

3 residues coordinate Zn(2+): H124, H128, and H134. The interval 162-205 is disordered; that stretch reads GTAPVAPGGEAQVPNEALETSGKRQDHSLGEILPGGMSRRLAGS.

It belongs to the endoribonuclease YbeY family. It depends on Zn(2+) as a cofactor.

The protein resides in the cytoplasm. In terms of biological role, single strand-specific metallo-endoribonuclease involved in late-stage 70S ribosome quality control and in maturation of the 3' terminus of the 16S rRNA. In Beijerinckia indica subsp. indica (strain ATCC 9039 / DSM 1715 / NCIMB 8712), this protein is Endoribonuclease YbeY.